Here is a 172-residue protein sequence, read N- to C-terminus: 3-hydroxydecanoyl-[acyl-carrier-protein] dehydratase (172 aa).

The active site involves H71.

Belongs to the thioester dehydratase family. FabA subfamily. In terms of assembly, homodimer.

Its subcellular location is the cytoplasm. It catalyses the reaction a (3R)-hydroxyacyl-[ACP] = a (2E)-enoyl-[ACP] + H2O. The enzyme catalyses (3R)-hydroxydecanoyl-[ACP] = (2E)-decenoyl-[ACP] + H2O. It carries out the reaction (2E)-decenoyl-[ACP] = (3Z)-decenoyl-[ACP]. The protein operates within lipid metabolism; fatty acid biosynthesis. In terms of biological role, necessary for the introduction of cis unsaturation into fatty acids. Catalyzes the dehydration of (3R)-3-hydroxydecanoyl-ACP to E-(2)-decenoyl-ACP and then its isomerization to Z-(3)-decenoyl-ACP. Can catalyze the dehydratase reaction for beta-hydroxyacyl-ACPs with saturated chain lengths up to 16:0, being most active on intermediate chain length. This chain is 3-hydroxydecanoyl-[acyl-carrier-protein] dehydratase, found in Yersinia pseudotuberculosis serotype O:1b (strain IP 31758).